The primary structure comprises 82 residues: Acyl carrier protein (82 aa).

A Carrier domain is found at 4–79 (PEMESRLKKI…DALNYIEQKL (76 aa)). Position 39 is an O-(pantetheine 4'-phosphoryl)serine (S39).

It belongs to the acyl carrier protein (ACP) family. In terms of processing, 4'-phosphopantetheine is transferred from CoA to a specific serine of apo-ACP by AcpS. This modification is essential for activity because fatty acids are bound in thioester linkage to the sulfhydryl of the prosthetic group.

It localises to the cytoplasm. It participates in lipid metabolism; fatty acid biosynthesis. Its function is as follows. Carrier of the growing fatty acid chain in fatty acid biosynthesis. The chain is Acyl carrier protein from Roseiflexus sp. (strain RS-1).